Reading from the N-terminus, the 335-residue chain is Large ribosomal subunit protein uL10 (335 aa).

A disordered region spans residues 304-335; sequence GAAAPVEEAPVEEKKEEKKEEAAAPAGLGMLF. Over residues 314–325 the composition is skewed to basic and acidic residues; that stretch reads VEEKKEEKKEEA.

The protein belongs to the universal ribosomal protein uL10 family. In terms of assembly, part of the 50S ribosomal subunit. Homodimer, it forms part of the ribosomal stalk which helps the ribosome interact with GTP-bound translation factors. Forms both a pentameric L10(L12)2(L12)2 and heptameric L10(L12)2(L12)2(L12)2 complex, where L10 forms an elongated spine to which the L12 dimers bind in a sequential fashion. The proportion of heptameric complexes increases during cell growth.

Functionally, forms part of the ribosomal stalk, playing a central role in the interaction of the ribosome with GTP-bound translation factors. This is Large ribosomal subunit protein uL10 from Methanococcus maripaludis (strain DSM 14266 / JCM 13030 / NBRC 101832 / S2 / LL).